A 187-amino-acid polypeptide reads, in one-letter code: Large ribosomal subunit protein uL6 (187 aa).

A disordered region spans residues 151 to 170; sequence EAARIRSLRPPEPYKGKGIK.

Belongs to the universal ribosomal protein uL6 family. In terms of assembly, part of the 50S ribosomal subunit.

In terms of biological role, this protein binds to the 23S rRNA, and is important in its secondary structure. It is located near the subunit interface in the base of the L7/L12 stalk, and near the tRNA binding site of the peptidyltransferase center. The protein is Large ribosomal subunit protein uL6 of Chloroflexus aurantiacus (strain ATCC 29366 / DSM 635 / J-10-fl).